We begin with the raw amino-acid sequence, 148 residues long: Globin, monomeric component M-IV (148 aa).

One can recognise a Globin domain in the interval G2 to Q147. H91 is a heme b binding site.

In terms of assembly, monomer.

This chain is Globin, monomeric component M-IV, found in Glycera dibranchiata (Bloodworm).